A 177-amino-acid polypeptide reads, in one-letter code: Small ribosomal subunit protein uS5 (177 aa).

The S5 DRBM domain occupies 19–82 (FIEKLVAIKR…DQAQKQMIKV (64 aa)).

Belongs to the universal ribosomal protein uS5 family. In terms of assembly, part of the 30S ribosomal subunit. Contacts proteins S4 and S8.

In terms of biological role, with S4 and S12 plays an important role in translational accuracy. Its function is as follows. Located at the back of the 30S subunit body where it stabilizes the conformation of the head with respect to the body. In Magnetococcus marinus (strain ATCC BAA-1437 / JCM 17883 / MC-1), this protein is Small ribosomal subunit protein uS5.